A 227-amino-acid chain; its full sequence is 2-C-methyl-D-erythritol 4-phosphate cytidylyltransferase (227 aa).

It belongs to the IspD/TarI cytidylyltransferase family. IspD subfamily.

It catalyses the reaction 2-C-methyl-D-erythritol 4-phosphate + CTP + H(+) = 4-CDP-2-C-methyl-D-erythritol + diphosphate. It functions in the pathway isoprenoid biosynthesis; isopentenyl diphosphate biosynthesis via DXP pathway; isopentenyl diphosphate from 1-deoxy-D-xylulose 5-phosphate: step 2/6. In terms of biological role, catalyzes the formation of 4-diphosphocytidyl-2-C-methyl-D-erythritol from CTP and 2-C-methyl-D-erythritol 4-phosphate (MEP). In Bordetella bronchiseptica (strain ATCC BAA-588 / NCTC 13252 / RB50) (Alcaligenes bronchisepticus), this protein is 2-C-methyl-D-erythritol 4-phosphate cytidylyltransferase.